A 454-amino-acid chain; its full sequence is Cobyrinate a,c-diamide synthase (454 aa).

One can recognise a GATase cobBQ-type domain in the interval Arg244–Lys440. The active-site Nucleophile is the Cys326.

Belongs to the CobB/CbiA family. Mg(2+) serves as cofactor.

It carries out the reaction cob(II)yrinate + 2 L-glutamine + 2 ATP + 2 H2O = cob(II)yrinate a,c diamide + 2 L-glutamate + 2 ADP + 2 phosphate + 2 H(+). Its pathway is cofactor biosynthesis; adenosylcobalamin biosynthesis; cob(II)yrinate a,c-diamide from sirohydrochlorin (anaerobic route): step 10/10. In terms of biological role, catalyzes the ATP-dependent amidation of the two carboxylate groups at positions a and c of cobyrinate, using either L-glutamine or ammonia as the nitrogen source. The polypeptide is Cobyrinate a,c-diamide synthase (Limosilactobacillus reuteri subsp. reuteri (strain JCM 1112) (Lactobacillus reuteri)).